We begin with the raw amino-acid sequence, 281 residues long: Urease accessory protein UreD (281 aa).

Belongs to the UreD family. UreD, UreF and UreG form a complex that acts as a GTP-hydrolysis-dependent molecular chaperone, activating the urease apoprotein by helping to assemble the nickel containing metallocenter of UreC. The UreE protein probably delivers the nickel.

It is found in the cytoplasm. Its function is as follows. Required for maturation of urease via the functional incorporation of the urease nickel metallocenter. This is Urease accessory protein UreD from Pseudomonas savastanoi pv. phaseolicola (strain 1448A / Race 6) (Pseudomonas syringae pv. phaseolicola (strain 1448A / Race 6)).